Reading from the N-terminus, the 777-residue chain is Hepatocyte growth factor-regulated tyrosine kinase substrate (777 aa).

The VHS domain occupies 15-143; the sequence is ATSQLLLETD…IMKVEGHVFP (129 aa). The segment at 160–220 adopts an FYVE-type zinc-finger fold; that stretch reads WVDAEECHRC…VCEPCFEQLN (61 aa). Positions 166, 169, 182, 185, 190, and 193 each coordinate Zn(2+). At K207 the chain carries N6-acetyllysine. Positions 212 and 215 each coordinate Zn(2+). The disordered stretch occupies residues 223–319; it reads AEGKAASTTE…SPVNSSAPLA (97 aa). The tract at residues 225 to 541 is interaction with SNX1; sequence GKAASTTELP…QRLQEQEKER (317 aa). The region spanning 258-277 is the UIM domain; the sequence is QEEEELQLALALSQSEAEEK. The span at 292-311 shows a compositional bias: low complexity; it reads AEPTPVASSAPPASSLYSSP. Y308, Y329, and Y334 each carry phosphotyrosine. The tract at residues 338–370 is disordered; that stretch reads KQEEARKSPTPSAPVPLTEPTAQPGEGHAIPAN. The interval 443–541 is interaction with SNAP25 and TRAK2; that stretch reads SINTMHPQLL…QRLQEQEKER (99 aa). The segment at 452–570 is interaction with STAM; sequence LELLNQLDER…FSLPYAQLQA (119 aa). The tract at residues 478–777 is interaction with NF2; that stretch reads ARGALSALRE…GSEAQLISFD (300 aa). K549 carries the post-translational modification N6-succinyllysine. The span at 645 to 658 shows a compositional bias: low complexity; that stretch reads AAAQGPAGPTTSPA. Disordered stretches follow at residues 645-698 and 712-777; these read AAAQ…YMGS and NLMP…ISFD. 2 stretches are compositionally biased toward polar residues: residues 659-698 and 730-739; these read YSSYQPTPTQGYQTVASQAPQSLPAISQPPQSGTMGYMGS and PYISGQQPVY. The span at 753–777 shows a compositional bias: low complexity; the sequence is PPVAQQPPAQGPPAQGSEAQLISFD.

In terms of assembly, component of the ESCRT-0 complex composed of STAM or STAM2 and HGS. Part of a complex at least composed of HSG, STAM2 (or probably STAM) and EPS15. Interacts with STAM. Interacts with STAM2. Interacts with EPS15; the interaction is direct, calcium-dependent and inhibited by SNAP25. Identified in a complex with STAM and LITAF. Found in a complex with STAM and E3 ligase ITCH and DTX3L. Interacts with E3 ligase DTX3L; the interaction brings together STAM and HSG, promotes their recruitment to early endosomes and decreases STAM and HGS ubiquitination by ITCH. Interacts with NF2; the interaction is direct. Interacts with ubiquitin; the interaction is direct. Interacts with VPS37C. Interacts with SMAD1, SMAD2 and SMAD3. Interacts with TSG101; the interaction mediates the association with the ESCRT-I complex. Interacts with SNAP25; the interaction is direct and decreases with addition of increasing concentrations of free calcium. Interacts with SNX1; the interaction is direct. Component of a 550 kDa membrane complex at least composed of HGS and SNX1 but excluding EGFR. Interacts with TRAK1. Interacts with TRAK2. Component of the CART complex, at least composed of ACTN4, HGS/HRS, MYO5B and TRIM3. Interacts (via UIM domain) with UBQLN1 (via ubiquitin-like domain). Interacts with ARRDC3. Identified in a complex containing at least ARRDC4, AVPR2 and HGS. Interacts with LAPTM4B; promotes HGS ubiquitination. In terms of processing, phosphorylated on Tyr-334. A minor site of phosphorylation on Tyr-329 is detected. Phosphorylation occurs in response to EGF, IL-2, GM-CSF and HGF. Ubiquitinated by ITCH.

It localises to the cytoplasm. The protein localises to the early endosome membrane. It is found in the endosome. Its subcellular location is the multivesicular body membrane. Functionally, involved in intracellular signal transduction mediated by cytokines and growth factors. When associated with STAM it suppresses DNA signaling upon stimulation by IL-2 and GM-CSF. Could be a direct effector of PI3-kinase in vesicular pathway via early endosomes and may regulate trafficking to early and late endosomes by recruiting clathrin. May concentrate ubiquitinated receptors within clathrin-coated regions. Involved in down-regulation of receptor tyrosine kinase via multivesicular body (MVBs) when complexed with STAM (ESCRT-0 complex). The ESCRT-0 complex binds ubiquitin and acts as a sorting machinery that recognizes ubiquitinated receptors and transfers them to further sequential lysosomal sorting/trafficking processes. May contribute to the efficient recruitment of SMADs to the activin receptor complex. Involved in receptor recycling via its association with the CART complex, a multiprotein complex required for efficient transferrin receptor recycling but not for EGFR degradation. The sequence is that of Hepatocyte growth factor-regulated tyrosine kinase substrate (HGS) from Bos taurus (Bovine).